Reading from the N-terminus, the 313-residue chain is tRNA dimethylallyltransferase (313 aa).

10 to 17 (GPTASGKT) contacts ATP. 12–17 (TASGKT) is a binding site for substrate. Interaction with substrate tRNA regions lie at residues 35–38 (DSAM), 159–163 (QRIQR), and 240–245 (RCVGYR).

This sequence belongs to the IPP transferase family. Monomer. Mg(2+) serves as cofactor.

The catalysed reaction is adenosine(37) in tRNA + dimethylallyl diphosphate = N(6)-dimethylallyladenosine(37) in tRNA + diphosphate. Functionally, catalyzes the transfer of a dimethylallyl group onto the adenine at position 37 in tRNAs that read codons beginning with uridine, leading to the formation of N6-(dimethylallyl)adenosine (i(6)A). The chain is tRNA dimethylallyltransferase from Legionella pneumophila subsp. pneumophila (strain Philadelphia 1 / ATCC 33152 / DSM 7513).